The following is a 269-amino-acid chain: Ribonuclease HII (269 aa).

One can recognise an RNase H type-2 domain in the interval 83–269 (YLIAGVDEVG…HRMSFLTNIL (187 aa)). A divalent metal cation contacts are provided by Asp-89, Glu-90, and Asp-185.

The protein belongs to the RNase HII family. Requires Mn(2+) as cofactor. Mg(2+) serves as cofactor.

The protein localises to the cytoplasm. It carries out the reaction Endonucleolytic cleavage to 5'-phosphomonoester.. In terms of biological role, endonuclease that specifically degrades the RNA of RNA-DNA hybrids. This Clostridium botulinum (strain ATCC 19397 / Type A) protein is Ribonuclease HII.